The primary structure comprises 311 residues: Putative HTH-type transcriptional regulatory protein PTO0557 (311 aa).

The HTH cro/C1-type domain maps to 132 to 186; it reads MRRIRELKGYSVGYLSSKLGISRRSISLYESGSSATIDIYLKLEETLGEDLTKDI. Positions 143–162 form a DNA-binding region, H-T-H motif; that stretch reads VGYLSSKLGISRRSISLYES.

In Picrophilus torridus (strain ATCC 700027 / DSM 9790 / JCM 10055 / NBRC 100828 / KAW 2/3), this protein is Putative HTH-type transcriptional regulatory protein PTO0557.